Reading from the N-terminus, the 370-residue chain is DNA replication and repair protein RecF (370 aa).

30 to 37 (GDNGSGKT) contributes to the ATP binding site.

This sequence belongs to the RecF family.

The protein localises to the cytoplasm. Functionally, the RecF protein is involved in DNA metabolism; it is required for DNA replication and normal SOS inducibility. RecF binds preferentially to single-stranded, linear DNA. It also seems to bind ATP. In Stutzerimonas stutzeri (strain A1501) (Pseudomonas stutzeri), this protein is DNA replication and repair protein RecF.